A 350-amino-acid polypeptide reads, in one-letter code: D-alanine--D-alanine ligase (350 aa).

One can recognise an ATP-grasp domain in the interval 134–337 (KIFAAQRGVK…LPKKHSIKVS (204 aa)). 160–212 (IAYPIILKPARLGSSIGVSVINEEKELDYGRDLAFEYDDTIIAESFKSGVKEY) contributes to the ATP binding site. Residues Asp-289, Glu-301, and Asn-303 each coordinate Mg(2+).

This sequence belongs to the D-alanine--D-alanine ligase family. The cofactor is Mg(2+). It depends on Mn(2+) as a cofactor.

It localises to the cytoplasm. It carries out the reaction 2 D-alanine + ATP = D-alanyl-D-alanine + ADP + phosphate + H(+). Its pathway is cell wall biogenesis; peptidoglycan biosynthesis. In terms of biological role, cell wall formation. The sequence is that of D-alanine--D-alanine ligase from Helicobacter hepaticus (strain ATCC 51449 / 3B1).